Reading from the N-terminus, the 246-residue chain is E3 ubiquitin-protein ligase LubX (246 aa).

2 U-box domains span residues Thr-36–Tyr-109 and Glu-131–Glu-204.

As to quaternary structure, interacts with host CLK1. In terms of processing, ubiquitinated in the presence of host E1 ubiquitin-activating enzyme, E2 ubiquitin-conjugating enzyme (UBE2D1 or UBE2D3) and ubiquitin.

It localises to the secreted. The protein localises to the host cell. The enzyme catalyses S-ubiquitinyl-[E2 ubiquitin-conjugating enzyme]-L-cysteine + [acceptor protein]-L-lysine = [E2 ubiquitin-conjugating enzyme]-L-cysteine + N(6)-ubiquitinyl-[acceptor protein]-L-lysine.. In terms of biological role, effector proteins function to alter host cell physiology and promote bacterial survival in host tissues. This protein is an E3 ubiquitin ligase that interferes with host's ubiquitination pathway. Acts in conjunction with host E2 ubiquitin-conjugating enzymes UBE2D1 (UBCH5A) or UBE2D3 (UBCH5C), and mediates polyubiquitination of host kinase CLK1. The protein is E3 ubiquitin-protein ligase LubX (lubX) of Legionella pneumophila subsp. pneumophila (strain Philadelphia 1 / ATCC 33152 / DSM 7513).